A 322-amino-acid chain; its full sequence is Lipoyl synthase (322 aa).

Positions 1–25 are enriched in basic and acidic residues; that stretch reads MSQRITIDHRSAPALRHPEKAHRPD. The interval 1–29 is disordered; it reads MSQRITIDHRSAPALRHPEKAHRPDNPIQ. C61, C66, C72, C87, C91, C94, and S300 together coordinate [4Fe-4S] cluster. Residues 73–289 form the Radical SAM core domain; the sequence is WSQRHATMMI…AAAARSKGFL (217 aa).

It belongs to the radical SAM superfamily. Lipoyl synthase family. It depends on [4Fe-4S] cluster as a cofactor.

It localises to the cytoplasm. It catalyses the reaction [[Fe-S] cluster scaffold protein carrying a second [4Fe-4S](2+) cluster] + N(6)-octanoyl-L-lysyl-[protein] + 2 oxidized [2Fe-2S]-[ferredoxin] + 2 S-adenosyl-L-methionine + 4 H(+) = [[Fe-S] cluster scaffold protein] + N(6)-[(R)-dihydrolipoyl]-L-lysyl-[protein] + 4 Fe(3+) + 2 hydrogen sulfide + 2 5'-deoxyadenosine + 2 L-methionine + 2 reduced [2Fe-2S]-[ferredoxin]. The protein operates within protein modification; protein lipoylation via endogenous pathway; protein N(6)-(lipoyl)lysine from octanoyl-[acyl-carrier-protein]: step 2/2. Catalyzes the radical-mediated insertion of two sulfur atoms into the C-6 and C-8 positions of the octanoyl moiety bound to the lipoyl domains of lipoate-dependent enzymes, thereby converting the octanoylated domains into lipoylated derivatives. The sequence is that of Lipoyl synthase from Gluconobacter oxydans (strain 621H) (Gluconobacter suboxydans).